Here is a 395-residue protein sequence, read N- to C-terminus: Succinyl-diaminopimelate desuccinylase (395 aa).

A Zn(2+)-binding site is contributed by H81. Residue D83 is part of the active site. Residue D114 participates in Zn(2+) binding. The active-site Proton acceptor is the E146. Residues E147, E175, and H364 each coordinate Zn(2+).

This sequence belongs to the peptidase M20A family. DapE subfamily. As to quaternary structure, homodimer. Requires Zn(2+) as cofactor. The cofactor is Co(2+).

The enzyme catalyses N-succinyl-(2S,6S)-2,6-diaminopimelate + H2O = (2S,6S)-2,6-diaminopimelate + succinate. It participates in amino-acid biosynthesis; L-lysine biosynthesis via DAP pathway; LL-2,6-diaminopimelate from (S)-tetrahydrodipicolinate (succinylase route): step 3/3. In terms of biological role, catalyzes the hydrolysis of N-succinyl-L,L-diaminopimelic acid (SDAP), forming succinate and LL-2,6-diaminopimelate (DAP), an intermediate involved in the bacterial biosynthesis of lysine and meso-diaminopimelic acid, an essential component of bacterial cell walls. The sequence is that of Succinyl-diaminopimelate desuccinylase from Parvibaculum lavamentivorans (strain DS-1 / DSM 13023 / NCIMB 13966).